Here is a 259-residue protein sequence, read N- to C-terminus: DNA-directed RNA polymerase subunit Rpo3 (259 aa).

It belongs to the archaeal Rpo3/eukaryotic RPB3 RNA polymerase subunit family. Part of the RNA polymerase complex.

Its subcellular location is the cytoplasm. The catalysed reaction is RNA(n) + a ribonucleoside 5'-triphosphate = RNA(n+1) + diphosphate. In terms of biological role, DNA-dependent RNA polymerase (RNAP) catalyzes the transcription of DNA into RNA using the four ribonucleoside triphosphates as substrates. This chain is DNA-directed RNA polymerase subunit Rpo3, found in Pyrobaculum arsenaticum (strain DSM 13514 / JCM 11321 / PZ6).